The sequence spans 340 residues: Mitochondrial import receptor subunit TOM40 homolog 2 (340 aa).

The disordered stretch occupies residues 1–37 (MGNVMASTADAESSRGRGHLSAGLRLPEAPQYSGGVP).

The protein belongs to the Tom40 family. Forms part of the preprotein translocase of the outer mitochondrial membrane (TOM complex). Interacts with mitochondrial targeting sequences. As to expression, only expressed in the male germline, detected in primary spermatocytes as well as post-meiotic stages. Not detected in stem cells and spermatogonia near the tip of the testis.

It is found in the mitochondrion outer membrane. Functionally, channel-forming protein essential for import of protein precursors into mitochondria. The polypeptide is Mitochondrial import receptor subunit TOM40 homolog 2 (Drosophila melanogaster (Fruit fly)).